The sequence spans 725 residues: Prolyl 3-hydroxylase 1 (725 aa).

The N-terminal stretch at 1 to 14 is a signal peptide; that stretch reads MALLLPLLPLLVWA. The stretch at 36–69 is one TPR 1 repeat; sequence PDALFAAGAEAYARGDWPAVVLQMERALRARAAI. The N-linked (GlcNAc...) asparagine glycan is linked to Asn82. TPR repeat units follow at residues 136–169, 198–231, and 294–327; these read RSPYNYLQVAYFKINKVAKAVAAAHTFFVANPEH, HMTEFRLGVRFYSEEQPAAAVLHLEKALQEYFVA, and PSHFNYLQFAYYNNGNYEKAIECAKTYLLFFPND. Residues 394 to 441 adopt a coiled-coil conformation; it reads KRLREKQKVERETAARISEEIGNLMKEIETLVEEKAKESAEMSKFIRE. N-linked (GlcNAc...) asparagine glycosylation is found at Asn460 and Asn533. Residues 557-671 form the Fe2OG dioxygenase domain; sequence SHLVCRTAID…RCAIALWFTL (115 aa). Fe cation is bound by residues His580, Asp582, and His652. Arg662 is a catalytic residue. The segment covering 701 to 715 has biased composition (polar residues); that stretch reads ETSAEQEPTAATSTA. A disordered region spans residues 701 to 725; sequence ETSAEQEPTAATSTAGLHAAGKDEL. The Prevents secretion from ER signature appears at 722–725; sequence KDEL.

It belongs to the leprecan family. In terms of assembly, binds unfolded collagen in a complex with CYPB and CRTAP. The cofactor is Fe cation. L-ascorbate is required as a cofactor. Expressed in embryonic dermis, tendon, cartilage, liver and kidney. Expression in the kidney is restricted to the calyx. In the liver, expression is restricted to the interlobular septum.

It is found in the endoplasmic reticulum. The enzyme catalyses L-prolyl-[collagen] + 2-oxoglutarate + O2 = trans-3-hydroxy-L-prolyl-[collagen] + succinate + CO2. Has prolyl 3-hydroxylase activity catalyzing the post-translational formation of 3-hydroxyproline in -Xaa-Pro-Gly-sequences in collagens, especially types IV and V. May be involved in the secretoty pathway of cells. Has growth suppressive activity in fibroblasts. The chain is Prolyl 3-hydroxylase 1 from Gallus gallus (Chicken).